Reading from the N-terminus, the 570-residue chain is Serine/threonine-protein kinase STY17 (570 aa).

Residues Leu-112–Gly-145 form a disordered region. Over residues Asp-129–Gly-145 the composition is skewed to polar residues. The 81-residue stretch at Glu-180–Phe-260 folds into the ACT domain. A Protein kinase domain is found at Leu-292–Ile-545. Residues Val-298–Leu-306 and Lys-319 each bind ATP. Asp-413 acts as the Proton acceptor in catalysis. A Phosphoserine modification is found at Ser-441. Thr-445 bears the Phosphothreonine mark.

Belongs to the protein kinase superfamily. Ser/Thr protein kinase family. In terms of processing, autophosphorylated on serine and threonine residues. Autophosphorylated at Thr-445.

The protein localises to the cytoplasm. It localises to the cytosol. The enzyme catalyses L-seryl-[protein] + ATP = O-phospho-L-seryl-[protein] + ADP + H(+). The catalysed reaction is L-threonyl-[protein] + ATP = O-phospho-L-threonyl-[protein] + ADP + H(+). Its activity is regulated as follows. Activated by autophosphorylation at Thr-445. In terms of biological role, serine/threonine protein kinase that specifically phosphorylates chloroplast precursor proteins in the cytosol within the cleavable presequences (transit peptides). May be part of a cytosolic regulatory network involved in chloroplast protein import. Does not phosphorylate mitochondrion precursor proteins. Specific for ATP and does not utilize other NTPs. Plays a role in chloroplast biogenesis and differentiation in cotyledons, possibly through phosphorylation of chloroplast preproteins. In Arabidopsis thaliana (Mouse-ear cress), this protein is Serine/threonine-protein kinase STY17.